Reading from the N-terminus, the 155-residue chain is Transcriptional repressor NrdR (155 aa).

Residues 1–11 (MECPNCHQNAS) are compositionally biased toward polar residues. The tract at residues 1 to 22 (MECPNCHQNASRVIDSRPSDEN) is disordered. Residues 3-34 (CPNCHQNASRVIDSRPSDENRAIRRRRECENC) fold into a zinc finger. The 91-residue stretch at 49 to 139 (LLVIKNDGTR…IYREFKDMSS (91 aa)) folds into the ATP-cone domain.

It belongs to the NrdR family. Zn(2+) serves as cofactor.

Negatively regulates transcription of bacterial ribonucleotide reductase nrd genes and operons by binding to NrdR-boxes. The chain is Transcriptional repressor NrdR from Lactobacillus helveticus (strain DPC 4571).